Consider the following 84-residue polypeptide: Large ribosomal subunit protein bL27 (84 aa).

The interval 1 to 22 (MAHKKAGGSTRNGRDSESKRLG) is disordered.

This sequence belongs to the bacterial ribosomal protein bL27 family.

The sequence is that of Large ribosomal subunit protein bL27 from Shewanella denitrificans (strain OS217 / ATCC BAA-1090 / DSM 15013).